Consider the following 95-residue polypeptide: uncharacterized protein (95 aa).

This is an uncharacterized protein from Autographa californica nuclear polyhedrosis virus (AcMNPV).